The following is a 307-amino-acid chain: Peroxisomal membrane protein PMP34 (307 aa).

Residues 1-9 (MASVLSYES) are Cytoplasmic-facing. The tract at residues 1–147 (MASVLSYESL…NEDIIPTNYK (147 aa)) is necessary for targeting to peroxisomes and interaction with PEX19. 3 Solcar repeats span residues 7–92 (YESL…LKAV), 99–192 (SSTG…LKRQ), and 200–294 (LSSL…LTAA). Residues 10–30 (LVHAVAGAVGSVTAMTVFFPL) form a helical membrane-spanning segment. Topologically, residues 31 to 66 (DTARLRLQVDEKRKSKTTHAVLLEIIKEEGLLAPYR) are lumenal. The chain crosses the membrane as a helical span at residues 67 to 87 (GWFPVISSLCCSNFVYFYTFN). Over 88-104 (SLKAVWVKGQRSSTGKD) the chain is Cytoplasmic. Residues 105 to 125 (LVVGFVAGVVNVLLTTPLWVV) traverse the membrane as a helical segment. The Lumenal segment spans residues 126 to 160 (NTRLKLQGAKFRNEDIIPTNYKGIIDAFHQIIRDE). Residues 161-181 (GILALWNGTFPSLLLVFNPAI) traverse the membrane as a helical segment. Residues 182–202 (QFMFYEGLKRQLLKKRMKLSS) lie on the Cytoplasmic side of the membrane. The short motif at 190 to 199 (KRQLLKKRMK) is the Peroxisome localization signal element. The helical transmembrane segment at 203–223 (LDVFIIGAIAKAIATTVTYPM) threads the bilayer. Residues 224–280 (QTVQSILRFGRHRLNPENRTLGSLRNVLSLLHQRVKRFGIMGLYKGLEAKLLQTVLT) are Lumenal-facing. The segment at 244–307 (LGSLRNVLSL…VMGLKSTHKH (64 aa)) is necessary for targeting to peroxisomes and interaction with PEX19. The chain crosses the membrane as a helical span at residues 281 to 301 (AALMFLVYEKLTAATFTVMGL). The Cytoplasmic portion of the chain corresponds to 302–307 (KSTHKH).

Belongs to the mitochondrial carrier (TC 2.A.29) family. Interacts (via N- and C-terminus peroxisomal targeting regions) with PEX19; the interaction occurs with the newly synthesized SLC25A17 in the cytosol. Expressed in liver, kidney, heart, spleen, muscle and lung.

It localises to the cytoplasm. The protein localises to the peroxisome membrane. It catalyses the reaction AMP(out) + CoA(in) = AMP(in) + CoA(out). It carries out the reaction 3'-dephospho-CoA(in) + AMP(out) = 3'-dephospho-CoA(out) + AMP(in). The catalysed reaction is acetyl-CoA(in) + AMP(out) = acetyl-CoA(out) + AMP(in). The enzyme catalyses AMP(in) + NAD(+)(out) = AMP(out) + NAD(+)(in). It catalyses the reaction FAD(in) + AMP(out) = FAD(out) + AMP(in). It carries out the reaction FMN(in) + AMP(out) = FMN(out) + AMP(in). The catalysed reaction is AMP(in) + ADP(out) = AMP(out) + ADP(in). The enzyme catalyses adenosine 3',5'-bisphosphate(in) + AMP(out) = adenosine 3',5'-bisphosphate(out) + AMP(in). It catalyses the reaction FAD(in) + CoA(out) = FAD(out) + CoA(in). It carries out the reaction FAD(in) + adenosine 3',5'-bisphosphate(out) = FAD(out) + adenosine 3',5'-bisphosphate(in). The catalysed reaction is FMN(in) + CoA(out) = FMN(out) + CoA(in). The enzyme catalyses FMN(in) + adenosine 3',5'-bisphosphate(out) = FMN(out) + adenosine 3',5'-bisphosphate(in). It catalyses the reaction FAD(out) + NAD(+)(in) = FAD(in) + NAD(+)(out). It carries out the reaction FMN(out) + NAD(+)(in) = FMN(in) + NAD(+)(out). The catalysed reaction is NAD(+)(in) + CoA(out) = NAD(+)(out) + CoA(in). The enzyme catalyses adenosine 3',5'-bisphosphate(out) + NAD(+)(in) = adenosine 3',5'-bisphosphate(in) + NAD(+)(out). It catalyses the reaction FMN(out) + ADP(in) = FMN(in) + ADP(out). It carries out the reaction FAD(out) + ADP(in) = FAD(in) + ADP(out). The catalysed reaction is ADP(out) + CoA(in) = ADP(in) + CoA(out). The enzyme catalyses adenosine 3',5'-bisphosphate(in) + ADP(out) = adenosine 3',5'-bisphosphate(out) + ADP(in). Peroxisomal transporter for multiple cofactors like coenzyme A (CoA), flavin adenine dinucleotide (FAD), flavin mononucleotide (FMN) and nucleotide adenosine monophosphate (AMP), and to a lesser extent for nicotinamide adenine dinucleotide (NAD(+)), adenosine diphosphate (ADP) and adenosine 3',5'-diphosphate (PAP). May catalyze the transport of free CoA, FAD and NAD(+) from the cytosol into the peroxisomal matrix by a counter-exchange mechanism. This Mus musculus (Mouse) protein is Peroxisomal membrane protein PMP34 (Slc25a17).